The primary structure comprises 727 residues: Synaptic vesicle glycoprotein 2C (727 aa).

Residues 1–57 (MEDSYKDRTSLMKGAKDIAREVKKQTVKKVNQAVDRAQDEYTQRSYSRFQDEEDDDD) form an interaction with SYT1 region. At 1-154 (MEDSYKDRTS…CGHGRFQWAL (154 aa)) the chain is on the cytoplasmic side. Disordered stretches follow at residues 24 to 84 (KQTV…GHDE) and 109 to 128 (VGQP…SERR). Phosphoserine is present on residues S75 and S76. Phosphothreonine is present on T79. The segment covering 113 to 128 (KGDEYKDRRELESERR) has biased composition (basic and acidic residues). A helical membrane pass occupies residues 155 to 175 (FFVLGMALMADGVEVFVVGFV). Residues 176 to 191 (LPSAETDLCIPNSGSG) lie on the Extracellular side of the membrane. The helical transmembrane segment at 192-212 (WLGSIVYLGMMVGAFFWGGLA) threads the bilayer. Residues 213–226 (DKVGRKQSLLICMS) are Cytoplasmic-facing. The chain crosses the membrane as a helical span at residues 227–247 (VNGFFAFLSSFVQGYGFFLFC). Position 248 (R248) is a topological domain, extracellular. The helical transmembrane segment at 249 to 269 (LLSGFGIGGAIPTVFSYFAEV) threads the bilayer. Topologically, residues 270–280 (LAREKRGEHLS) are cytoplasmic. Residues 281–301 (WLCMFWMIGGIYASAMAWAII) form a helical membrane-spanning segment. The Extracellular segment spans residues 302–320 (PHYGWSFSMGSAYQFHSWR). Residues 321–341 (VFVIVCALPCVSSVVALTFMP) form a helical membrane-spanning segment. Residues 342 to 437 (ESPRFLLEVG…PVRDNTIKLT (96 aa)) lie on the Cytoplasmic side of the membrane. The chain crosses the membrane as a helical span at residues 438-458 (IVWFTLSFGYYGLSVWFPDVI). The Extracellular portion of the chain corresponds to 459 to 578 (KPLQSDEYAL…CQITFDDDYS (120 aa)). Position 466 is a phosphotyrosine (Y466). N480, N484, N534, N559, and N565 each carry an N-linked (GlcNAc...) asparagine glycan. The interval 519-563 (SCTFEDVTSVNTYFKNCTFIDTVFDNTDFEPYKFIDSEFKNCSFF) is (Microbial infection) C.botulinum neurotoxin type A-binding. Residues 579-599 (AYWIYFVNFLGTLAVLPGNIV) form a helical membrane-spanning segment. Topologically, residues 600 to 609 (SALLMDRIGR) are cytoplasmic. A helical transmembrane segment spans residues 610–630 (LTMLGGSMVLSGISCFFLWFG). Residues 631 to 636 (TSESMM) lie on the Extracellular side of the membrane. A helical membrane pass occupies residues 637-657 (IGMLCLYNGLTISAWNSLDVV). The Cytoplasmic segment spans residues 658 to 669 (TVELYPTDRRAT). The helical transmembrane segment at 670-690 (GFGFLNALCKAAAVLGNLIFG) threads the bilayer. The Extracellular segment spans residues 691–698 (SLVSITKS). A helical membrane pass occupies residues 699–719 (IPILLASTVLVCGGLVGLCLP). Topologically, residues 720-727 (DTRTQVLM) are cytoplasmic.

It belongs to the major facilitator superfamily. Interacts with SYT1 in a calcium-dependent manner. In terms of assembly, (Microbial infection) Interacts with C.botulinum neurotoxin type A1 and type A2 (BoNT/A, botA). Interaction is improved by glycosylation of SV2. Post-translationally, N-glycosylated. Upon expression in a kidney cell line the most abundant glycan on Asn-534 is GlcNAc(3)Hex(5), while on Asn-559 and Asn-565 the most abundant glycan is GlcNAc2Fuc1Man3GlcNAc3Gal3. Both Asn-559 and Asn-565 have a high degree of glycan heterogeneity.

The protein resides in the cytoplasmic vesicle. Its subcellular location is the secretory vesicle. It is found in the synaptic vesicle membrane. Functionally, plays a role in the control of regulated secretion in neural and endocrine cells, enhancing selectively low-frequency neurotransmission. Positively regulates vesicle fusion by maintaining the readily releasable pool of secretory vesicles. Its function is as follows. (Microbial infection) Receptor for C.botulinum neurotoxin type A (BoNT/A, botA); the toxin probably binds via extracellular loop 4. Recognition by BoNT/A relies on both protein-protein and protein-N-glycosylation; glycosylation of Asn-559 increases its affinity for BoNT/A. Also serves as a receptor for the closely related C.botulinum neurotoxin type A2; glycosylation is not essential but enhances the interaction. In terms of biological role, (Microbial infection) Possible receptor for C.botulinum neurotoxin type D (BoNT/D, botD); note that type D does not usually infect humans. This Homo sapiens (Human) protein is Synaptic vesicle glycoprotein 2C (SV2C).